A 293-amino-acid chain; its full sequence is Ethanolamine ammonia-lyase small subunit (293 aa).

2 residues coordinate adenosylcob(III)alamin: V207 and E228.

The protein belongs to the EutC family. As to quaternary structure, the basic unit is a heterodimer which dimerizes to form tetramers. The heterotetramers trimerize; 6 large subunits form a core ring with 6 small subunits projecting outwards. It depends on adenosylcob(III)alamin as a cofactor.

It is found in the bacterial microcompartment. The catalysed reaction is ethanolamine = acetaldehyde + NH4(+). The protein operates within amine and polyamine degradation; ethanolamine degradation. In terms of biological role, catalyzes the deamination of various vicinal amino-alcohols to oxo compounds. Allows this organism to utilize ethanolamine as the sole source of nitrogen and carbon in the presence of external vitamin B12. This Clostridioides difficile (strain 630) (Peptoclostridium difficile) protein is Ethanolamine ammonia-lyase small subunit.